The chain runs to 859 residues: DNA mismatch repair protein MutS (859 aa).

Residue 618 to 625 (GPNMGGKS) coordinates ATP. A disordered region spans residues 803–829 (RDHDVQQNTEQQGTQQNMSFVPSAPSP). Residues 808 to 819 (QQNTEQQGTQQN) are compositionally biased toward low complexity.

This sequence belongs to the DNA mismatch repair MutS family.

Its function is as follows. This protein is involved in the repair of mismatches in DNA. It is possible that it carries out the mismatch recognition step. This protein has a weak ATPase activity. This chain is DNA mismatch repair protein MutS, found in Shewanella pealeana (strain ATCC 700345 / ANG-SQ1).